Consider the following 318-residue polypeptide: NADH-ubiquinone oxidoreductase chain 1 (318 aa).

The next 8 helical transmembrane spans lie at 2–22, 69–89, 102–122, 146–166, 171–191, 222–242, 253–273, and 294–314; these read FLIN…FLTL, FLFT…WAPL, LLFI…SGWA, MTTI…TAFA, HLWL…STLA, LFFM…VILF, EIST…FLWV, and LPLT…LACI.

It belongs to the complex I subunit 1 family.

Its subcellular location is the mitochondrion inner membrane. The catalysed reaction is a ubiquinone + NADH + 5 H(+)(in) = a ubiquinol + NAD(+) + 4 H(+)(out). Functionally, core subunit of the mitochondrial membrane respiratory chain NADH dehydrogenase (Complex I) that is believed to belong to the minimal assembly required for catalysis. Complex I functions in the transfer of electrons from NADH to the respiratory chain. The immediate electron acceptor for the enzyme is believed to be ubiquinone. This Mammuthus primigenius (Siberian woolly mammoth) protein is NADH-ubiquinone oxidoreductase chain 1 (MT-ND1).